Here is a 509-residue protein sequence, read N- to C-terminus: GMP synthase [glutamine-hydrolyzing] (509 aa).

In terms of domain architecture, Glutamine amidotransferase type-1 spans 4–193 (NVLILDFGSQ…LIKIAGTKAT (190 aa)). Cysteine 79 (nucleophile) is an active-site residue. Active-site residues include histidine 167 and glutamate 169. Residues 194–384 (WTPGKFVDLT…LGIDKELLGR (191 aa)) enclose the GMPS ATP-PPase domain. 221-227 (SGGVDST) is an ATP binding site.

As to quaternary structure, homodimer.

It carries out the reaction XMP + L-glutamine + ATP + H2O = GMP + L-glutamate + AMP + diphosphate + 2 H(+). The protein operates within purine metabolism; GMP biosynthesis; GMP from XMP (L-Gln route): step 1/1. In terms of biological role, catalyzes the synthesis of GMP from XMP. The polypeptide is GMP synthase [glutamine-hydrolyzing] (Christiangramia forsetii (strain DSM 17595 / CGMCC 1.15422 / KT0803) (Gramella forsetii)).